A 565-amino-acid polypeptide reads, in one-letter code: NAD-dependent malic enzyme (565 aa).

Tyr104 acts as the Proton donor in catalysis. An NAD(+)-binding site is contributed by Arg157. Lys175 (proton acceptor) is an active-site residue. Residues Glu246, Asp247, and Asp270 each contribute to the a divalent metal cation site. Residues Asp270 and Asn418 each coordinate NAD(+).

It belongs to the malic enzymes family. In terms of assembly, homotetramer. It depends on Mg(2+) as a cofactor. The cofactor is Mn(2+).

The enzyme catalyses (S)-malate + NAD(+) = pyruvate + CO2 + NADH. The catalysed reaction is oxaloacetate + H(+) = pyruvate + CO2. The sequence is that of NAD-dependent malic enzyme from Escherichia coli O139:H28 (strain E24377A / ETEC).